The primary structure comprises 542 residues: MSRQSLTKAHAKISELTWEPTFATPATRFGTDYTFEKAPKKDPLKQIMRSYFSMEEEKDNRVYGAMDGAIRGNMFRQVQQRWLEWQKLFLSIIPFPEISAARAMPMAIDAVPNPEIHNGLAVQMIDEVRHSTIQMNLKKLYMNNYIDPSGFDMTEKAFANNYAGTIGRQFGEGFITGDAITAANIYLTVVAETAFTNTLFVAMPDEAAANGDYLLPTVFHSVQSDESRHISNGYSILLMALADERNRPLLERDLRYAWWNNHCVVDAAIGTFIEYGTKDRRKDRESYAEMWRRWIYDDYYRSYLLPLEKYGLTIPHDLVEEAWKRIVEKGYVHEVARFFATGWPVNYWRIDTMTDTDFEWFEHKYPGWYSKFGKWWENYNRLAYPGRNKPIAFEEVGYQYPHRCWTCMVPALIREDMIVEKVDGQWRTYCSETCYWTDAVAFRGEYEGRETPNMGRLTGFREWETLHHGKDLADIVTDLGYVRDDGKTLVGQPHLNLDPQKMWTLDDVRGNTFNSPNVLLNQMTDDERDAHVAAYRAGGVPA.

Fe cation contacts are provided by Glu-97, Glu-127, His-130, Glu-192, Glu-226, and His-229.

This sequence belongs to the TmoA/XamoA family. In terms of assembly, the propane 2-monooxygenase multicomponent enzyme system is composed of an electron transfer component and a monooxygenase component interacting with the effector protein MimD. The electron transfer component is composed of a reductase (MimB), and the monooxygenase component is formed by a large subunit (MimA) and a small subunit (MimC). Requires the presence of the chaperonin-like protein MimG to ensure a productive folding, resulting of a soluble MimA, which leads to the active form of MimABCD. It depends on Fe(2+) as a cofactor.

The catalysed reaction is propane + NADH + O2 + H(+) = propan-2-ol + NAD(+) + H2O. It catalyses the reaction acetone + NADH + O2 + H(+) = hydroxyacetone + NAD(+) + H2O. The enzyme catalyses butan-2-one + NADH + O2 + H(+) = 1-hydroxy-2-butanone + NAD(+) + H2O. It carries out the reaction phenol + NADH + O2 + H(+) = hydroquinone + NAD(+) + H2O. Functionally, component of the propane 2-monooxygenase multicomponent enzyme system which is involved in the degradation of propane via the O2-dependent hydroxylation of propane. Also involved in the degradation of acetone via the O2-dependent hydroxylation of acetone. Also able to catalyze the oxidation of phenol, methylethylketone (2-butanone), 1-propanol and 2-propanol. The sequence is that of Propane 2-monooxygenase, hydroxylase component large subunit from Mycolicibacterium smegmatis (strain ATCC 700084 / mc(2)155) (Mycobacterium smegmatis).